The primary structure comprises 908 residues: Protein translocase subunit SecA (908 aa).

ATP-binding positions include Q87, 105 to 109 (GEGKT), and D513. The segment covering 852–863 (ARRAQAQHATAE) has biased composition (low complexity). The interval 852-908 (ARRAQAQHATAENQLADDEAEAASPQTVVRDERKVGRNEPCPCGSGKKYKQCHGKID) is disordered. C892, C894, C903, and H904 together coordinate Zn(2+). The span at 898 to 908 (KKYKQCHGKID) shows a compositional bias: basic residues.

This sequence belongs to the SecA family. As to quaternary structure, monomer and homodimer. Part of the essential Sec protein translocation apparatus which comprises SecA, SecYEG and auxiliary proteins SecDF-YajC and YidC. The cofactor is Zn(2+).

It localises to the cell inner membrane. It is found in the cytoplasm. The enzyme catalyses ATP + H2O + cellular proteinSide 1 = ADP + phosphate + cellular proteinSide 2.. Part of the Sec protein translocase complex. Interacts with the SecYEG preprotein conducting channel. Has a central role in coupling the hydrolysis of ATP to the transfer of proteins into and across the cell membrane, serving both as a receptor for the preprotein-SecB complex and as an ATP-driven molecular motor driving the stepwise translocation of polypeptide chains across the membrane. The chain is Protein translocase subunit SecA from Vibrio atlanticus (strain LGP32) (Vibrio splendidus (strain Mel32)).